The chain runs to 265 residues: uncharacterized protein (265 aa).

Residues 233 to 265 (STACGSDQRPTRLPRASCSSRSISGSAARPWKR) are disordered. A compositionally biased stretch (low complexity) spans 247–265 (RASCSSRSISGSAARPWKR).

This is an uncharacterized protein from Escherichia coli.